A 326-amino-acid polypeptide reads, in one-letter code: Vacuolar protein sorting-associated protein 26A-A (326 aa).

The tract at residues 306-326 (TNFHQRFEPQEPQASAEEPEI) is disordered. Residues 315-326 (QEPQASAEEPEI) are compositionally biased toward low complexity.

The protein belongs to the VPS26 family. In terms of assembly, component of the heterotrimeric retromer cargo-selective complex (CSC) which is believed to associate with variable sorting nexins to form functionally distinct retromer complex variants.

The protein resides in the cytoplasm. It is found in the endosome membrane. It localises to the early endosome. In terms of biological role, acts as a component of the retromer cargo-selective complex (CSC). The CSC is believed to be the core functional component of retromer or respective retromer complex variants acting to prevent missorting of selected transmembrane cargo proteins into the lysosomal degradation pathway. Retromer mediates retrograde transport of cargo proteins from endosomes to the trans-Golgi network (TGN). This is Vacuolar protein sorting-associated protein 26A-A (vps26a-a) from Xenopus laevis (African clawed frog).